We begin with the raw amino-acid sequence, 307 residues long: NAD kinase 1 (307 aa).

Catalysis depends on Asp-67, which acts as the Proton acceptor. NAD(+) is bound by residues 67 to 68, 149 to 150, Arg-160, Asp-181, and 192 to 197; these read DG, NE, and TCYTSS.

Belongs to the NAD kinase family. The cofactor is a divalent metal cation.

Its subcellular location is the cytoplasm. The catalysed reaction is NAD(+) + ATP = ADP + NADP(+) + H(+). Its function is as follows. Involved in the regulation of the intracellular balance of NAD and NADP, and is a key enzyme in the biosynthesis of NADP. Catalyzes specifically the phosphorylation on 2'-hydroxyl of the adenosine moiety of NAD to yield NADP. Essential for photoheterotrophic growth. Has a significant function in the oxidative pentose phosphate (OPP) pathway for glucose catabolism under photoheterotrophic conditions. Is also involved in cellular redox homeostasis. In Synechocystis sp. (strain ATCC 27184 / PCC 6803 / Kazusa), this protein is NAD kinase 1.